The chain runs to 295 residues: Pyridoxal 5'-phosphate synthase subunit PdxS (295 aa).

D25 contributes to the D-ribose 5-phosphate binding site. The active-site Schiff-base intermediate with D-ribose 5-phosphate is the K82. G154 contributes to the D-ribose 5-phosphate binding site. R166 contributes to the D-glyceraldehyde 3-phosphate binding site. D-ribose 5-phosphate is bound by residues G215 and 236-237 (GS).

Belongs to the PdxS/SNZ family. In terms of assembly, in the presence of PdxT, forms a dodecamer of heterodimers.

The enzyme catalyses aldehydo-D-ribose 5-phosphate + D-glyceraldehyde 3-phosphate + L-glutamine = pyridoxal 5'-phosphate + L-glutamate + phosphate + 3 H2O + H(+). The protein operates within cofactor biosynthesis; pyridoxal 5'-phosphate biosynthesis. In terms of biological role, catalyzes the formation of pyridoxal 5'-phosphate from ribose 5-phosphate (RBP), glyceraldehyde 3-phosphate (G3P) and ammonia. The ammonia is provided by the PdxT subunit. Can also use ribulose 5-phosphate and dihydroxyacetone phosphate as substrates, resulting from enzyme-catalyzed isomerization of RBP and G3P, respectively. This Listeria welshimeri serovar 6b (strain ATCC 35897 / DSM 20650 / CCUG 15529 / CIP 8149 / NCTC 11857 / SLCC 5334 / V8) protein is Pyridoxal 5'-phosphate synthase subunit PdxS.